A 444-amino-acid polypeptide reads, in one-letter code: MDIVNLILVAVLIALTAFFVASEFAIIRIRGSRIDQLIAEGNKAAIAVKKVTTHLDEYLSACQLGITLTSIGLGVLGESTIERLLHPLFVQMNVPGSLSHVISFIFAYAIITFLHVVVGELAPKTVAIQKAEAVSMLFAKPLIWFYRIAFPFIWLLNNSARLLTKAFGLETVSENELAHSEEELRIILSESYKSGEINQSEFKYVNKIFEFDDRLAKEIMIPRTEIVSLPHDIKISEMMDIIQIEKYTRYPVEEGDKDNIIGVINIKEVLTACISGEVSVDSTISQFVNPIIHVIESAPIQDLLVKMQKERVHMAILSDEYGGTAGLVTVEDIIEEIVGEIRDEFDIDEISEIRKIGEGHYILDGKVLIDQVNDLLGIHLENEEVDTIGGWFLTQKYDVEKDDSIIEEGCEFIINEIDGHHVAYIEVKKLQEEELLETANQQEA.

A CNNM transmembrane domain is found at 1 to 201 (MDIVNLILVA…YKSGEINQSE (201 aa)). 3 helical membrane passes run 7 to 27 (ILVA…FAII), 61 to 81 (ACQL…ESTI), and 101 to 121 (VISF…VGEL). 2 consecutive CBS domains span residues 220-282 (MIPR…SVDS) and 284-344 (ISQF…IRDE).

The protein belongs to the UPF0053 family.

It is found in the cell membrane. This Bacillus subtilis (strain 168) protein is UPF0053 protein YhdP (yhdP).